Reading from the N-terminus, the 414-residue chain is uncharacterized protein (414 aa).

Residues 87–117 (KTNDDNKTNGRETHLRPSPSKPEYTGRPTQN) form a disordered region. Positions 88 to 101 (TNDDNKTNGRETHL) are enriched in basic and acidic residues. A coiled-coil region spans residues 243 to 405 (SMLQSSIDKL…RNKLEMEVER (163 aa)).

This is an uncharacterized protein from Encephalitozoon cuniculi (strain GB-M1) (Microsporidian parasite).